The following is a 187-amino-acid chain: BLOC-1-related complex subunit 8 homolog (187 aa).

The tract at residues 165-187 (QSQHETANDTRQGYNDDANNDQD) is disordered.

It belongs to the BORCS8 family.

The protein localises to the lysosome membrane. Its function is as follows. May participate in the coupling of lysosomes to microtubule plus-end-directed kinesin motor. The protein is BLOC-1-related complex subunit 8 homolog of Nematostella vectensis (Starlet sea anemone).